A 229-amino-acid polypeptide reads, in one-letter code: Uracil-DNA glycosylase (229 aa).

The active-site Proton acceptor is aspartate 67.

Belongs to the uracil-DNA glycosylase (UDG) superfamily. UNG family.

Its subcellular location is the cytoplasm. It catalyses the reaction Hydrolyzes single-stranded DNA or mismatched double-stranded DNA and polynucleotides, releasing free uracil.. Functionally, excises uracil residues from the DNA which can arise as a result of misincorporation of dUMP residues by DNA polymerase or due to deamination of cytosine. This is Uracil-DNA glycosylase from Coxiella burnetii (strain CbuG_Q212) (Coxiella burnetii (strain Q212)).